The following is a 516-amino-acid chain: Rho guanine nucleotide exchange factor 9 (516 aa).

The 60-residue stretch at 8 to 67 folds into the SH3 domain; sequence DSIVSAEAVWDHVTMANRELAFKAGDVIKVLDASNKDWWWGQIDDEEGWFPASFVRLWVN. Residues 100–110 are interaction with GPHN; it reads RDQMRANVINE. Positions 103 to 287 constitute a DH domain; that stretch reads MRANVINEIM…RNVTQQINER (185 aa). Residues 318–425 form the PH domain; sequence ELIYTGEMAW…WLRAFREERK (108 aa). The segment at 450–480 is disordered; the sequence is RKASKQKGVNSARSVPPSYPPPQDPLNQGQY. At serine 502 the chain carries Phosphoserine.

Interacts with GPHN. In terms of tissue distribution, detected in embryonic and adult brain.

The protein resides in the cytoplasm. The protein localises to the postsynaptic density. Functionally, acts as a guanine nucleotide exchange factor (GEF) for CDC42. Promotes formation of GPHN clusters. This Mus musculus (Mouse) protein is Rho guanine nucleotide exchange factor 9 (Arhgef9).